We begin with the raw amino-acid sequence, 226 residues long: Vacuolar protein sorting-associated protein 20 (226 aa).

Glycine 2 is lipidated: N-myristoyl glycine.

It belongs to the SNF7 family. As to quaternary structure, component of the endosomal sorting required for transport complex III (ESCRT-III).

It is found in the endosome membrane. Its subcellular location is the vacuole membrane. The protein localises to the cytoplasm. The protein resides in the cell cortex. In terms of biological role, class E VPS protein implicated in concentration and sorting of cargo proteins of the multivesicular body (MVB) for incorporation into intralumenal vesicles. The lumenal sequestrated membrane proteins will be targeted into the vacuole after fusion of the endosome with the vacuole. This Schizosaccharomyces pombe (strain 972 / ATCC 24843) (Fission yeast) protein is Vacuolar protein sorting-associated protein 20 (vps20).